Reading from the N-terminus, the 1661-residue chain is ATP-dependent bile acid permease (1661 aa).

Topologically, residues 1 to 33 are lumenal; the sequence is MHHVLNSTRPDHRFWFYDDVTQYGRTKYLNYYT. Asn6 is a glycosylation site (N-linked (GlcNAc...) asparagine). Residues 34–54 traverse the membrane as a helical segment; sequence PLVLLIFTVLFITYNIWKHYY. At 55–74 the chain is on the cytoplasmic side; it reads YYDVLHLKQKNPIDELLYSS. A helical transmembrane segment spans residues 75-95; the sequence is TDEDEQSPLINNNTITTNYVD. The Lumenal portion of the chain corresponds to 96–133; that stretch reads NNCTKDALKNRHFSLEKLKSVKVNGEPHGTPEIVRRGF. Asn97 carries an N-linked (GlcNAc...) asparagine glycan. The chain crosses the membrane as a helical span at residues 134–154; it reads IEKSRIILEFFLVLSQVIIHS. The Cytoplasmic segment spans residues 155-166; that stretch reads FILLHYVNKNPE. Residues 167–187 traverse the membrane as a helical segment; that stretch reads FTQQGTITGLVEWCALFIIVS. Over 188–205 the chain is Lumenal; the sequence is LRLANVNQNFKFINKYPG. Residues 206 to 226 form a helical membrane-spanning segment; the sequence is NLWSVSFINYLALFISMILPF. Over 227–345 the chain is Cytoplasmic; it reads RSIFIHHINS…VKRKRIFSLN (119 aa). The helical transmembrane segment at 346 to 366 threads the bilayer; sequence LFFFFSNYLVLQCFWAFLGSV. Residues 354–662 enclose the ABC transmembrane type-1 1 domain; it reads LVLQCFWAFL…LSDMLSFVVQ (309 aa). Over 367 to 393 the chain is Lumenal; that stretch reads LSFIPTVLLKRILEYVEDQSSAPSNLA. The helical transmembrane segment at 394-414 threads the bilayer; the sequence is WFYVTVMFVGRILVAICQAQA. At 415–495 the chain is on the cytoplasmic side; sequence LFFGRRVCIR…AFKVSEICGY (81 aa). Residues 445-468 are disordered; the sequence is NKTKPSNEDPQEINDQKSINGDEE. The helical transmembrane segment at 496-516 threads the bilayer; the sequence is LHSFLEAFVMTVVALALLYRL. At 517 to 519 the chain is on the lumenal side; it reads LGF. Residues 520–540 traverse the membrane as a helical segment; the sequence is AAIVGVLIIVAMLPLNYKLAK. The Cytoplasmic portion of the chain corresponds to 541-602; the sequence is YIGDLQKKNL…LLLMRSIVWS (62 aa). The helical transmembrane segment at 603-623 threads the bilayer; it reads ISSFLWFVTPTIVTAASFAYY. Over 624 to 644 the chain is Lumenal; sequence IYVQGEVLTTPVAFTALSLFT. Residues 645–665 form a helical membrane-spanning segment; the sequence is LLRDPLDRLSDMLSFVVQSKV. Topologically, residues 666-1053 are cytoplasmic; that stretch reads SLDRVQDFLN…SWWVRAWASH (388 aa). One can recognise an ABC transporter 1 domain in the interval 694–935; the sequence is FAFENSTISW…GLFGEDELVK (242 aa). 729-736 contacts ATP; it reads GPTGSGKT. 3 positions are modified to phosphoserine: Ser936, Ser940, and Ser955. Residues 1026 to 1345 enclose the ABC transmembrane type-1 2 domain; it reads VSFLASLFLI…LVRLYSEVEM (320 aa). Residues 1054-1074 form a helical membrane-spanning segment; the sequence is NVIAKIIPRAQRAIAFISKKA. Residues 1075–1114 lie on the Lumenal side of the membrane; that stretch reads SHLIDWRGSSQISMASAENQPSSGHSTMYYLVLYLIIGFA. Residues 1115 to 1135 traverse the membrane as a helical segment; sequence QALLGAGKTILNFVAGINASR. Over 1136–1178 the chain is Cytoplasmic; that stretch reads KIFNMILNKVLHSKIRFFDATPTGRIMNRFSKDIEAIDQELTP. The helical transmembrane segment at 1179–1199 threads the bilayer; the sequence is YIQGAFYSLIECLSTVILITF. Residue Ile1200 is a topological domain, lumenal. The chain crosses the membrane as a helical span at residues 1201 to 1221; it reads TPQFLSVAIVVSILYYFVGYF. Residues 1222-1292 are Cytoplasmic-facing; sequence YMAGSRELKR…VANRWLAFRI (71 aa). Residues 1293–1313 traverse the membrane as a helical segment; sequence DMIGSLVIFGAGLFILFNINN. Topologically, residues 1314–1315 are lumenal; it reads LD. The helical transmembrane segment at 1316-1336 threads the bilayer; it reads SGMAGISLTYAISFTEGALWL. Over 1337–1661 the chain is Cytoplasmic; the sequence is VRLYSEVEMN…FVEKLNSKKD (325 aa). Residues 1381 to 1636 form the ABC transporter 2 domain; the sequence is IEVNDLSLRY…KQSAFYSMCE (256 aa). ATP is bound at residue 1415–1422; sequence GRTGAGKS.

The protein belongs to the ABC transporter superfamily. ABCC family. Conjugate transporter (TC 3.A.1.208) subfamily.

It localises to the vacuole membrane. Functionally, vacuolar class C ABC transporter which regulates the translocation of phosphatidylcholine to the vacuole lumen, the release of lumenal calcium stores, and acts as a negative regulator of vacuole fusion. Exhibits ATP-dependent bile acid transport. This chain is ATP-dependent bile acid permease (YBT1), found in Saccharomyces cerevisiae (strain ATCC 204508 / S288c) (Baker's yeast).